A 473-amino-acid polypeptide reads, in one-letter code: MTHGLPHFTSAQVLVIGDVILDRYWHGTTSRISPEAPVPVVQVTGREDRPGGAGNVAVNVAALGAEVTLLGLIGADEAAAALRSLLAHRGVHCCLEGLPNIATLTKLRVISRHQQLIRLDFEDDFIPAHGEALLPAYSTALRGKSVVILSDYGKGTLQEPQRLIALGREVGVPILIDPKGADFSHYHGATIITPNLAEFEMVVGPCPDEASLVWKGEQLRQQLALKALLITRGEQGMTLLEQGHSPVHLPTEAREVFDVTGAGDTVISVLGAALAAGGTFKEATLLANQAAGIVVGKLGTASVTRDELQQALHPRAIRRGITSEEELLHFINLARSRGECIVMTNGCFDILHPGHVNYLAEARQLGDRLIVAVNDDASVQRLKGKNRPINSLAQRLTVLAALHDVDWVVPFSEDTPARLIERVLPDILVKGGDYTPEQIAGANAVVANGGKIIILTYQQGCSTSQIIDIIRKN.

A ribokinase region spans residues 1 to 317 (MTHGLPHFTS…LQQALHPRAI (317 aa)). 195 to 198 (NLAE) provides a ligand contact to ATP. The active site involves Asp-264. A cytidylyltransferase region spans residues 343-473 (MTNGCFDILH…SQIIDIIRKN (131 aa)).

The protein in the N-terminal section; belongs to the carbohydrate kinase PfkB family. In the C-terminal section; belongs to the cytidylyltransferase family. Homodimer.

It catalyses the reaction D-glycero-beta-D-manno-heptose 7-phosphate + ATP = D-glycero-beta-D-manno-heptose 1,7-bisphosphate + ADP + H(+). The enzyme catalyses D-glycero-beta-D-manno-heptose 1-phosphate + ATP + H(+) = ADP-D-glycero-beta-D-manno-heptose + diphosphate. Its pathway is nucleotide-sugar biosynthesis; ADP-L-glycero-beta-D-manno-heptose biosynthesis; ADP-L-glycero-beta-D-manno-heptose from D-glycero-beta-D-manno-heptose 7-phosphate: step 1/4. It participates in nucleotide-sugar biosynthesis; ADP-L-glycero-beta-D-manno-heptose biosynthesis; ADP-L-glycero-beta-D-manno-heptose from D-glycero-beta-D-manno-heptose 7-phosphate: step 3/4. Catalyzes the phosphorylation of D-glycero-D-manno-heptose 7-phosphate at the C-1 position to selectively form D-glycero-beta-D-manno-heptose-1,7-bisphosphate. Its function is as follows. Catalyzes the ADP transfer from ATP to D-glycero-beta-D-manno-heptose 1-phosphate, yielding ADP-D-glycero-beta-D-manno-heptose. In Nitrosococcus oceani (strain ATCC 19707 / BCRC 17464 / JCM 30415 / NCIMB 11848 / C-107), this protein is Bifunctional protein HldE.